The chain runs to 310 residues: Ribosomal protein uL3 glutamine methyltransferase (310 aa).

Belongs to the protein N5-glutamine methyltransferase family. PrmB subfamily.

It catalyses the reaction L-glutaminyl-[ribosomal protein uL3] + S-adenosyl-L-methionine = N(5)-methyl-L-glutaminyl-[ribosomal protein uL3] + S-adenosyl-L-homocysteine + H(+). Specifically methylates large ribosomal subunit protein uL3 on 'Gln-150'. In Shigella dysenteriae serotype 1 (strain Sd197), this protein is Ribosomal protein uL3 glutamine methyltransferase.